We begin with the raw amino-acid sequence, 506 residues long: Cysteine--tRNA ligase (506 aa).

C43 provides a ligand contact to Zn(2+). The short motif at 45–55 is the 'HIGH' region element; it reads VTVYDLCHLGH. Residues C237, H262, and E266 each contribute to the Zn(2+) site. A 'KMSKS' region motif is present at residues 294-298; the sequence is KMSKS. K297 is an ATP binding site.

The protein belongs to the class-I aminoacyl-tRNA synthetase family. In terms of assembly, monomer. Requires Zn(2+) as cofactor.

Its subcellular location is the cytoplasm. It carries out the reaction tRNA(Cys) + L-cysteine + ATP = L-cysteinyl-tRNA(Cys) + AMP + diphosphate. This chain is Cysteine--tRNA ligase, found in Synechococcus sp. (strain JA-3-3Ab) (Cyanobacteria bacterium Yellowstone A-Prime).